The following is a 224-amino-acid chain: UPF0758 protein LCA_0852 (224 aa).

The MPN domain maps to 100–222; it reads VVASSQMVGQ…YLSLREEGYL (123 aa). Zn(2+)-binding residues include His171, His173, and Asp184. The short motif at 171 to 184 is the JAMM motif element; that stretch reads HNHPSGQLAPSTQD.

The protein belongs to the UPF0758 family.

This chain is UPF0758 protein LCA_0852, found in Latilactobacillus sakei subsp. sakei (strain 23K) (Lactobacillus sakei subsp. sakei).